The sequence spans 239 residues: Ribonuclease PH (239 aa).

Residues arginine 86 and 124-126 (GTR) contribute to the phosphate site.

It belongs to the RNase PH family. As to quaternary structure, homohexameric ring arranged as a trimer of dimers.

It carries out the reaction tRNA(n+1) + phosphate = tRNA(n) + a ribonucleoside 5'-diphosphate. Its function is as follows. Phosphorolytic 3'-5' exoribonuclease that plays an important role in tRNA 3'-end maturation. Removes nucleotide residues following the 3'-CCA terminus of tRNAs; can also add nucleotides to the ends of RNA molecules by using nucleoside diphosphates as substrates, but this may not be physiologically important. Probably plays a role in initiation of 16S rRNA degradation (leading to ribosome degradation) during starvation. The polypeptide is Ribonuclease PH (Rickettsia bellii (strain OSU 85-389)).